A 213-amino-acid polypeptide reads, in one-letter code: MQLSLAPCLACLLVHAAFVAVESQGWQAFKNDATEIIPGLREYPEPPQELENNQTMNRAENGGRPPHHPYDTKDVSEYSCRELHYTRFVTDGPCRSAKPVTELVCSGQCGPARLLPNAIGRVKWWRPNGPDFRCIPDRYRAQRVQLLCPGGAAPRSRKVRLVASCKCKRLTRFHNQSELKDFGPETARPQKGRKPRPRARGAKANQAELENAY.

A signal peptide spans 1–28 (MQLSLAPCLACLLVHAAFVAVESQGWQA). Asn-53 carries N-linked (GlcNAc...) asparagine glycosylation. 4 cysteine pairs are disulfide-bonded: Cys-80–Cys-134, Cys-94–Cys-148, Cys-105–Cys-165, and Cys-109–Cys-167. The 91-residue stretch at 82-172 (ELHYTRFVTD…ASCKCKRLTR (91 aa)) folds into the CTCK domain. The N-linked (GlcNAc...) asparagine glycan is linked to Asn-175. The tract at residues 178-213 (ELKDFGPETARPQKGRKPRPRARGAKANQAELENAY) is disordered. The segment covering 190-201 (QKGRKPRPRARG) has biased composition (basic residues).

Belongs to the sclerostin family. In terms of assembly, interacts with LRP4 (via the extracellular domain); the interaction facilitates the inhibition of Wnt signaling. Interacts with LRP5 (via the first two YWTD-EGF repeat domains); the interaction inhibits Wnt-mediated signaling. Interacts with LRP6.

Its subcellular location is the secreted. In terms of biological role, negative regulator of bone growth that acts through inhibition of Wnt signaling and bone formation. The protein is Sclerostin of Rattus norvegicus (Rat).